The chain runs to 78 residues: UPF0291 protein LBUL_1264 (78 aa).

This sequence belongs to the UPF0291 family.

The protein resides in the cytoplasm. In Lactobacillus delbrueckii subsp. bulgaricus (strain ATCC BAA-365 / Lb-18), this protein is UPF0291 protein LBUL_1264.